Here is a 350-residue protein sequence, read N- to C-terminus: Heat-inducible transcription repressor HrcA (350 aa).

This sequence belongs to the HrcA family.

In terms of biological role, negative regulator of class I heat shock genes (grpE-dnaK-dnaJ and groELS operons). Prevents heat-shock induction of these operons. The sequence is that of Heat-inducible transcription repressor HrcA from Xanthomonas euvesicatoria pv. vesicatoria (strain 85-10) (Xanthomonas campestris pv. vesicatoria).